The chain runs to 26 residues: Mu-theraphotoxin-Phlo2a (26 aa).

3 disulfides stabilise this stretch: Cys-2–Cys-16, Cys-9–Cys-21, and Cys-15–Cys-25.

It belongs to the neurotoxin 30 (phrixotoxin) family. In terms of tissue distribution, expressed by the venom gland.

The protein localises to the secreted. Its function is as follows. Gating-modifier toxin that non-selectively inhibits voltage-gated sodium channel Nav by shifting the threshold for channel activation to more positive potentials. This toxin moderately inhibits human Nav1.2/SCN2A (IC(50)=404 nM), Nav1.5/SCN5A (IC(50)=218 nM) and Nav1.7/SCN9A (IC(50)=333 nM). Inhibition of Nav1.7 is voltage-dependent, with lower inhibition at more positive test pulses. This is Mu-theraphotoxin-Phlo2a from Phlogius sp. (Tarantula spider).